The chain runs to 815 residues: Subtilisin-like protease SBT2.5 (815 aa).

The signal sequence occupies residues 1 to 19; sequence MDIGLRIFVVFVLLVAVTA. Residues 21 to 124 enclose the Inhibitor I9 domain; it reads VYIVTMEGDP…RSVDKDWKVR (104 aa). The Peptidase S8 domain occupies 120-671; it reads DWKVRRLTTH…SGHVNPSAAL (552 aa). Catalysis depends on charge relay system residues Asp160 and His234. Positions 397-501 constitute a PA domain; it reads TLVSANDVLL…VSKSMDLIDY (105 aa). 2 N-linked (GlcNAc...) asparagine glycosylation sites follow: Asn503 and Asn577. Ser596 serves as the catalytic Charge relay system. A glycan (N-linked (GlcNAc...) asparagine) is linked at Asn701.

This sequence belongs to the peptidase S8 family. Expressed in roots, leaves and flowers of mature plants.

This is Subtilisin-like protease SBT2.5 from Arabidopsis thaliana (Mouse-ear cress).